The sequence spans 628 residues: tRNA uridine 5-carboxymethylaminomethyl modification enzyme MnmG (628 aa).

Residue 13 to 18 (GAGHAG) participates in FAD binding. NAD(+) is bound at residue 273–287 (GPRYCPSIEDKIVRF).

The protein belongs to the MnmG family. As to quaternary structure, homodimer. Heterotetramer of two MnmE and two MnmG subunits. The cofactor is FAD.

It is found in the cytoplasm. Its function is as follows. NAD-binding protein involved in the addition of a carboxymethylaminomethyl (cmnm) group at the wobble position (U34) of certain tRNAs, forming tRNA-cmnm(5)s(2)U34. The protein is tRNA uridine 5-carboxymethylaminomethyl modification enzyme MnmG of Buchnera aphidicola subsp. Acyrthosiphon pisum (strain 5A).